The chain runs to 249 residues: Triosephosphate isomerase (249 aa).

9–11 is a binding site for substrate; sequence NWK. His91 (electrophile) is an active-site residue. The Proton acceptor role is filled by Glu163. Substrate contacts are provided by residues Gly169, Ser209, and 230–231; that span reads GG.

Belongs to the triosephosphate isomerase family. As to quaternary structure, homodimer.

It localises to the cytoplasm. It carries out the reaction D-glyceraldehyde 3-phosphate = dihydroxyacetone phosphate. Its pathway is carbohydrate biosynthesis; gluconeogenesis. It functions in the pathway carbohydrate degradation; glycolysis; D-glyceraldehyde 3-phosphate from glycerone phosphate: step 1/1. Its function is as follows. Involved in the gluconeogenesis. Catalyzes stereospecifically the conversion of dihydroxyacetone phosphate (DHAP) to D-glyceraldehyde-3-phosphate (G3P). The sequence is that of Triosephosphate isomerase from Halorhodospira halophila (strain DSM 244 / SL1) (Ectothiorhodospira halophila (strain DSM 244 / SL1)).